Reading from the N-terminus, the 151-residue chain is MFQVFKPHAGEDYKYPRETETIWSHPYVVEGSHKSPLESLSLHGCLAAMAPSITSSEDSSPSQRDKKDLSLDLLLTRKKRSQGLHWSHWQGLNHMSIRIHTPEQGSPSLGQNWSWGNRKEKGVAQRQVPTTGTHSFFHCTSEGNKEKPHHF.

The disordered stretch occupies residues 122–151 (GVAQRQVPTTGTHSFFHCTSEGNKEKPHHF).

This is an uncharacterized protein from Homo sapiens (Human).